The primary structure comprises 282 residues: E3 ubiquitin-protein ligase Siah1 (282 aa).

The tract at residues 1-28 is disordered; the sequence is MSRQTATALPTGTSKCPPSQRVPTLSGT. Residues 41–76 form an RING-type zinc finger; the sequence is CPVCFDYVLPPILQCQSGHLVCSNCRPKLTCCPTCR. The segment at 90–282 is SBD; sequence VANSVLFPCK…LGINVTISMC (193 aa). The segment at 93–153 adopts an SIAH-type zinc-finger fold; sequence SVLFPCKYAS…VMPHLLHQHK (61 aa). Zn(2+) is bound by residues Cys98, Cys105, His117, Cys121, Cys128, Cys135, His147, and His152.

Belongs to the SINA (Seven in absentia) family. Homodimer.

It catalyses the reaction S-ubiquitinyl-[E2 ubiquitin-conjugating enzyme]-L-cysteine + [acceptor protein]-L-lysine = [E2 ubiquitin-conjugating enzyme]-L-cysteine + N(6)-ubiquitinyl-[acceptor protein]-L-lysine.. Its pathway is protein modification; protein ubiquitination. E3 ubiquitin-protein ligase that mediates ubiquitination and subsequent proteasomal degradation of target proteins. E3 ubiquitin ligases accept ubiquitin from an E2 ubiquitin-conjugating enzyme in the form of a thioester and then directly transfers the ubiquitin to targeted substrates. It probably triggers the ubiquitin-mediated degradation of different substrates. This is E3 ubiquitin-protein ligase Siah1 (siah1) from Danio rerio (Zebrafish).